The sequence spans 223 residues: Thymidine kinase (223 aa).

Residues 19–26 (GPMFAGKT) and 96–99 (DEVQ) contribute to the ATP site. Residue Glu-97 is the Proton acceptor of the active site. Positions 153, 156, 191, and 194 each coordinate Zn(2+).

This sequence belongs to the thymidine kinase family. In terms of assembly, homotetramer.

The protein resides in the cytoplasm. It carries out the reaction thymidine + ATP = dTMP + ADP + H(+). The protein is Thymidine kinase of Ureaplasma parvum serovar 3 (strain ATCC 27815 / 27 / NCTC 11736).